A 155-amino-acid chain; its full sequence is Small ribosomal subunit protein uS7c (155 aa).

It belongs to the universal ribosomal protein uS7 family. In terms of assembly, part of the 30S ribosomal subunit.

The protein resides in the plastid. The protein localises to the chloroplast. One of the primary rRNA binding proteins, it binds directly to 16S rRNA where it nucleates assembly of the head domain of the 30S subunit. The sequence is that of Small ribosomal subunit protein uS7c (rps7) from Chaetosphaeridium globosum (Charophycean green alga).